We begin with the raw amino-acid sequence, 171 residues long: 3-hydroxydecanoyl-[acyl-carrier-protein] dehydratase (171 aa).

Residue H70 is part of the active site.

The protein belongs to the thioester dehydratase family. FabA subfamily. Homodimer.

The protein localises to the cytoplasm. It catalyses the reaction a (3R)-hydroxyacyl-[ACP] = a (2E)-enoyl-[ACP] + H2O. The catalysed reaction is (3R)-hydroxydecanoyl-[ACP] = (2E)-decenoyl-[ACP] + H2O. The enzyme catalyses (2E)-decenoyl-[ACP] = (3Z)-decenoyl-[ACP]. Its pathway is lipid metabolism; fatty acid biosynthesis. In terms of biological role, necessary for the introduction of cis unsaturation into fatty acids. Catalyzes the dehydration of (3R)-3-hydroxydecanoyl-ACP to E-(2)-decenoyl-ACP and then its isomerization to Z-(3)-decenoyl-ACP. Can catalyze the dehydratase reaction for beta-hydroxyacyl-ACPs with saturated chain lengths up to 16:0, being most active on intermediate chain length. This Stenotrophomonas maltophilia (strain K279a) protein is 3-hydroxydecanoyl-[acyl-carrier-protein] dehydratase.